We begin with the raw amino-acid sequence, 94 residues long: Neutrophil defensin 1 (94 aa).

The N-terminal stretch at M1–A19 is a signal peptide. Residues E20–A38 constitute a propeptide that is removed on maturation. Intrachain disulfides connect C66/C94, C68/C83, and C73/C93. At R78 the chain carries ADP-ribosylarginine; by ART1. Y85 is modified (phosphotyrosine). Residue R88 is modified to ADP-ribosylarginine; by ART1.

It belongs to the alpha-defensin family. As to quaternary structure, tetramer. Dimer. Interacts with RETN. (Microbial infection) Interacts with HIV-1 surface protein gp120. In terms of assembly, (Microbial infection) Interacts with herpes virus 1 (HHV1) envelope glycoprotein B; this interaction inhibits viral infection. In terms of processing, ADP-ribosylation drastically reduces cytotoxic and antibacterial activities, and enhances IL8 production. Phosphorylation at Tyr-85 has been found in some cancer cell lines, and interferes with ADP-ribosylation.

The protein resides in the secreted. Effector molecule of the innate immune system that acts via antibiotic-like properties against a broad array of infectious agents including bacteria, fungi, and viruses or by promoting the activation and maturation of some APCs. Interacts with the essential precursor of cell wall synthesis lipid II to inhibit bacterial cell wall synthesis. Inhibits adenovirus infection via inhibition of viral disassembly at the vertex region, thereby restricting the release of internal capsid protein pVI, which is required for endosomal membrane penetration during cell entry. In addition, interaction with adenovirus capsid leads to the redirection of viral particles to TLR4 thereby promoting a NLRP3-mediated inflammasome response and interleukin 1-beta (IL-1beta) release. Induces the production of proinflammatory cytokines including type I interferon (IFN) in plasmacytoid dendritic cells (pDCs) by triggering the degradation of NFKBIA and nuclear translocation of IRF1, both of which are required for activation of pDCs. The chain is Neutrophil defensin 1 (DEFA1) from Homo sapiens (Human).